We begin with the raw amino-acid sequence, 448 residues long: ATP-dependent protease ATPase subunit HslU (448 aa).

ATP-binding positions include valine 21, 63–68, aspartate 260, glutamate 326, and arginine 398; that span reads GVGKTE.

Belongs to the ClpX chaperone family. HslU subfamily. As to quaternary structure, a double ring-shaped homohexamer of HslV is capped on each side by a ring-shaped HslU homohexamer. The assembly of the HslU/HslV complex is dependent on binding of ATP.

The protein resides in the cytoplasm. Its function is as follows. ATPase subunit of a proteasome-like degradation complex; this subunit has chaperone activity. The binding of ATP and its subsequent hydrolysis by HslU are essential for unfolding of protein substrates subsequently hydrolyzed by HslV. HslU recognizes the N-terminal part of its protein substrates and unfolds these before they are guided to HslV for hydrolysis. The chain is ATP-dependent protease ATPase subunit HslU from Sulfurihydrogenibium sp. (strain YO3AOP1).